The sequence spans 292 residues: 5,10-methylenetetrahydrofolate reductase (292 aa).

Glutamate 26 functions as the Proton donor/acceptor in the catalytic mechanism. Threonine 57 contacts NADH. Positions 58, 60, 86, 116, 117, 118, 130, 150, 154, 157, 163, 166, 169, and 170 each coordinate FAD. A (6S)-5-methyl-5,6,7,8-tetrahydrofolate-binding site is contributed by aspartate 118. Glutamine 181 contacts NADH. (6S)-5-methyl-5,6,7,8-tetrahydrofolate contacts are provided by glutamine 181, glutamine 217, and arginine 277.

The protein belongs to the methylenetetrahydrofolate reductase family. It depends on FAD as a cofactor.

The catalysed reaction is (6S)-5-methyl-5,6,7,8-tetrahydrofolate + NAD(+) = (6R)-5,10-methylene-5,6,7,8-tetrahydrofolate + NADH + H(+). It functions in the pathway one-carbon metabolism; tetrahydrofolate interconversion. Its pathway is amino-acid biosynthesis; L-methionine biosynthesis via de novo pathway. Functionally, catalyzes the NADH-dependent reduction of 5,10-methylenetetrahydrofolate to 5-methyltetrahydrofolate. Is required to provide the methyl group necessary for methionine synthetase to convert homocysteine to methionine; the methyl group is given by 5-methyltetrahydrofolate. The chain is 5,10-methylenetetrahydrofolate reductase (metF) from Haemophilus influenzae (strain ATCC 51907 / DSM 11121 / KW20 / Rd).